We begin with the raw amino-acid sequence, 167 residues long: Chorion class CB protein PC404 (167 aa).

The segment at 1 to 55 (IGREAIVGAGLQGPFGGPWPYDALSPFDMPYGPALPAMSCGAGSFGPSSGFAPAA) is left arm. Residues 56-126 (AYGGGLAVTS…GDGAVGIVAE (71 aa)) form a central domain region. The interval 127–167 (TPFASTSVNPAYGYGGAIGGGVPYNSYGPIGYGGCGYNALY) is right arm.

Belongs to the chorion protein family.

In terms of biological role, this protein is one of many from the eggshell of the silk moth. The chain is Chorion class CB protein PC404 from Antheraea polyphemus (Polyphemus moth).